The chain runs to 652 residues: MTEHVEQLEFQAETHQLLELMIHSVYSNKDTFLRELISNASDALDKLRLESFKDKDLHVDTADLHIELEVDKDNRILTVRDNGIGMSRAEVVDLIGTLAKSGTAELRRKLSEAKSEAAAEELIGQFGIGFYSTFMVADKVTLTTRKAGETGGTRWESSAGSSTYTIEDLAEAPQGTAVSLHLKPADEEDHLYDYTQEWKLREIVKKYSDFIAWPIRMQVERTVTEGEGEDKQEKTIVEEQTLNSRKALWTRPRGEVSDEEYKEFYKHVSHAWDEPLEIIPLKAEGTFEYQALLFLPSQAPFDLFTREHKRGVQLYVKRVFIMDNCEELMPEYLRFVKGVVDAQDLSLNVSREILQQDRQIQMIRKRLVKKVLATVKDLQQAEDQSKYQTFWREFGRVLKEGLLSDFDNRETILQVSSFASTHSDSELTTLAQYVERMPEGQDAIYYMTGESRQQVESSPHMEAFKAKGREVLILTDPVDEMWVGSVPEFDGKRFQSIAKGEVDLESEEEKKASEALREQQDKEFADLLSWLGKTLEENIKEVRLTNRLTTSPACLVGDVFDFTPMLERMYRASGQPVPVSKRILELNPTHPLVTGLRDAYDQRKQDADEGKVPELTETAELLYGTAVLAEGGELKDPARFAHILTDRLTRTL.

Positions 1-351 (MTEHVEQLEF…AQDLSLNVSR (351 aa)) are a; substrate-binding. A b region spans residues 352–568 (EILQQDRQIQ…VFDFTPMLER (217 aa)). A c region spans residues 569–652 (MYRASGQPVP…ILTDRLTRTL (84 aa)).

The protein belongs to the heat shock protein 90 family. As to quaternary structure, homodimer.

It is found in the cytoplasm. In terms of biological role, molecular chaperone. Has ATPase activity. This is Chaperone protein HtpG from Nocardia farcinica (strain IFM 10152).